The primary structure comprises 204 residues: Cytochrome c biogenesis ATP-binding export protein CcmA (204 aa).

The ABC transporter domain occupies 3–204 (LSGHGLRCVR…ARELRIGGTT (202 aa)). ATP is bound at residue 35–42 (GPNGAGKT).

The protein belongs to the ABC transporter superfamily. CcmA exporter (TC 3.A.1.107) family. The complex is composed of two ATP-binding proteins (CcmA) and two transmembrane proteins (CcmB).

Its subcellular location is the cell inner membrane. The catalysed reaction is heme b(in) + ATP + H2O = heme b(out) + ADP + phosphate + H(+). Functionally, part of the ABC transporter complex CcmAB involved in the biogenesis of c-type cytochromes; once thought to export heme, this seems not to be the case, but its exact role is uncertain. Responsible for energy coupling to the transport system. In Nitrobacter hamburgensis (strain DSM 10229 / NCIMB 13809 / X14), this protein is Cytochrome c biogenesis ATP-binding export protein CcmA.